A 306-amino-acid chain; its full sequence is Mitochondrial brown fat uncoupling protein 1 (306 aa).

At 1–10 the chain is on the mitochondrial intermembrane side; sequence MVGTTTTDVP. Residues 11–32 traverse the membrane as a helical segment; that stretch reads PTMGVKIFSAGVAACLADVITF. Solcar repeat units follow at residues 11 to 102, 110 to 200, and 209 to 294; these read PTMG…VQEF, PSLG…MKGA, and DDVP…LKGE. Topologically, residues 33–73 are mitochondrial matrix; the sequence is PLDTAKVRQQIQGEFPITSGIRYKGVLGTITTLAKTEGPLK. Lysine 56 serves as a coordination point for fatty acid 16:0. Residues 74-96 form a helical membrane-spanning segment; sequence LYSGLPAGLQRQISFASLRIGLY. At 97–115 the chain is on the mitochondrial intermembrane side; that stretch reads DTVQEFFTSGEETPSLGSK. The helical transmembrane segment at 116-132 threads the bilayer; the sequence is ISAGLTTGGVAVFIGQP. Topologically, residues 133 to 177 are mitochondrial matrix; the sequence is TEVVKVRLQAQSHLHGLKPRYTGTYNAYRIIATTESLTSLWKGTT. A helical membrane pass occupies residues 178–194; sequence PNLLRNVIINCTELVTY. The Mitochondrial intermembrane portion of the chain corresponds to 195–211; it reads DLMKGALVRNEILADDV. Residues 212-231 traverse the membrane as a helical segment; the sequence is PCHFVSALIAGFCTTLLSSP. At 232–265 the chain is on the mitochondrial matrix side; it reads VDVVKTRFINSPPGQYASVPNCAMTMFTKEGPTA. Cysteine 253 carries the post-translational modification Cysteine sulfenic acid (-SOH). The chain crosses the membrane as a helical span at residues 266-288; that stretch reads FFKGFVPSFLRLGSWNVIMFVCF. Lysine 268 provides a ligand contact to fatty acid 16:0. The Mitochondrial intermembrane portion of the chain corresponds to 289 to 306; the sequence is EKLKGELMRSRQTVDCAT.

Belongs to the mitochondrial carrier (TC 2.A.29) family. In terms of assembly, most probably functions as a monomer. Binds one purine nucleotide per monomer. However, has also been suggested to function as a homodimer or a homotetramer. Tightly associates with cardiolipin in the mitochondrion inner membrane; may stabilize and regulate its activity. May undergo sulfenylation upon cold exposure. May increase the sensitivity of UCP1 thermogenic function to the activation by noradrenaline probably through structural effects. Post-translationally, may undergo ubiquitin-mediated proteasomal degradation. Brown adipose tissue.

It localises to the mitochondrion inner membrane. It catalyses the reaction H(+)(in) = H(+)(out). With respect to regulation, has no constitutive proton transporter activity and has to be activated by long-chain fatty acids/LCFAs. Inhibited by purine nucleotides. Both purine nucleotides and LCFAs bind the cytosolic side of the transporter and directly compete to activate or inhibit it. Activated by noradrenaline and reactive oxygen species. Despite lacking canonical translational encoding for selenocysteine, a small pool of the protein has been observed to selectively incorporate selenocysteine at 'Cys-253'. Selenocysteine-modified protein is highly sensitive to redox modification and may constitute a pool of protein highly sensitive to activation by elevated levels of reactive oxygen species (ROS). Functionally, mitochondrial protein responsible for thermogenic respiration, a specialized capacity of brown adipose tissue and beige fat that participates in non-shivering adaptive thermogenesis to temperature and diet variations and more generally to the regulation of energy balance. Functions as a long-chain fatty acid/LCFA and proton symporter, simultaneously transporting one LCFA and one proton through the inner mitochondrial membrane. However, LCFAs remaining associated with the transporter via their hydrophobic tails, it results in an apparent transport of protons activated by LCFAs. Thereby, dissipates the mitochondrial proton gradient and converts the energy of substrate oxydation into heat instead of ATP. Regulates the production of reactive oxygen species/ROS by mitochondria. The sequence is that of Mitochondrial brown fat uncoupling protein 1 from Oryctolagus cuniculus (Rabbit).